The sequence spans 236 residues: uncharacterized protein (236 aa).

The helical transmembrane segment at 52 to 72 threads the bilayer; that stretch reads FFPYIALFQIIMLIILLILYF. The segment at 183-236 is disordered; that stretch reads SDKREHDDEELSFTTEMETITTETETSSTIPHLRSLPIKSESSMETTSEETDEE. Positions 196 to 212 are enriched in low complexity; it reads TTEMETITTETETSSTI.

The protein resides in the membrane. This is an uncharacterized protein from Acheta domesticus (House cricket).